The chain runs to 1026 residues: Translation initiation factor IF-2, chloroplastic (1026 aa).

A chloroplast-targeting transit peptide spans 1–63 (MPSMLVLVGT…KKWLCRYSVS (63 aa)). Basic and acidic residues predominate over residues 158-173 (AEKLEIPKPGNKEGGE). Disordered regions lie at residues 158–208 (AEKL…TMKS), 230–284 (FNRG…PPVK), and 300–393 (VSEE…KWSK). Residues 178–194 (SQPSANSSNSRNGSYAN) show a composition bias toward polar residues. A compositionally biased stretch (pro residues) spans 254-269 (LAPPQPPFRPQPPVRP). Basic and acidic residues predominate over residues 306–317 (SSVKSKERKPIL). Over residues 384–393 (SGRKGRKWSK) the composition is skewed to basic residues. The tr-type G domain maps to 499 to 672 (DRPPVITIMG…MLVAELQELK (174 aa)). The tract at residues 508–515 (GHVDHGKT) is G1. 508–515 (GHVDHGKT) contributes to the GTP binding site. The segment at 533 to 537 (GITQG) is G2. The interval 558 to 561 (DTPG) is G3. GTP contacts are provided by residues 558–562 (DTPGH) and 612–615 (NKID). The interval 612 to 615 (NKID) is G4. Residues 648–650 (SAL) are G5.

The protein belongs to the TRAFAC class translation factor GTPase superfamily. Classic translation factor GTPase family. IF-2 subfamily.

It is found in the plastid. Its subcellular location is the chloroplast. One of the essential components for the initiation of protein synthesis. Protects formylmethionyl-tRNA from spontaneous hydrolysis and promotes its binding to the 30S ribosomal subunits. Also involved in the hydrolysis of GTP during the formation of the 70S ribosomal complex. The sequence is that of Translation initiation factor IF-2, chloroplastic from Arabidopsis thaliana (Mouse-ear cress).